The following is a 355-amino-acid chain: F-box protein At1g31080 (355 aa).

An F-box domain is found at 4–49 (GANSASIPNDLILEILSRLPAKSTGRFRCVSKLWGSMLCHSYFTEL). Over residues 306-320 (AGTSRSPPKQSTSTS) the composition is skewed to polar residues. Residues 306–333 (AGTSRSPPKQSTSTSSREDHEVRTLAHQ) form a disordered region. The segment covering 321 to 333 (SREDHEVRTLAHQ) has biased composition (basic and acidic residues).

The protein is F-box protein At1g31080 of Arabidopsis thaliana (Mouse-ear cress).